The primary structure comprises 579 residues: Tetratricopeptide repeat protein 39C (579 aa).

The span at 182–197 (QQGALASDQANHNTST) shows a compositional bias: polar residues. Positions 182 to 202 (QQGALASDQANHNTSTGSGGR) are disordered. TPR repeat units lie at residues 311–344 (SLFI…ASDQ), 349–382 (HVCL…SRWS), and 481–514 (GLKH…EYGR).

The protein belongs to the TTC39 family.

This is Tetratricopeptide repeat protein 39C (ttc39c) from Danio rerio (Zebrafish).